Consider the following 683-residue polypeptide: E3 ubiquitin-protein ligase RNF103 (683 aa).

A run of 4 helical transmembrane segments spans residues 6–26 (FFLLLYFLVLFVLARFFEAIV), 326–346 (LFVLSLVLVNLMAWMDLFITQ), 366–386 (LLIISWLPVLGFLQLPYLDSF), and 411–431 (MFYTSHPALFLSTYLGHGLLI). A compositionally biased stretch (acidic residues) spans 525 to 542 (EEMSESSQDTENDSDSDN). Residues 525–548 (EEMSESSQDTENDSDSDNMDTFSS) form a disordered region. The RING-type zinc finger occupies 619–661 (CVVCLENFENGCLLMGLPCGHVFHQNCIVMWLAGGRHCCPVCR).

As to quaternary structure, interacts with DERL1 and VCP. In terms of tissue distribution, highly expressed in the normal cerebellum but not in the cerebral cortex.

Its subcellular location is the endoplasmic reticulum membrane. The enzyme catalyses S-ubiquitinyl-[E2 ubiquitin-conjugating enzyme]-L-cysteine + [acceptor protein]-L-lysine = [E2 ubiquitin-conjugating enzyme]-L-cysteine + N(6)-ubiquitinyl-[acceptor protein]-L-lysine.. It functions in the pathway protein modification; protein ubiquitination. Functionally, acts as an E2-dependent E3 ubiquitin-protein ligase, probably involved in the ER-associated protein degradation pathway. This Mus musculus (Mouse) protein is E3 ubiquitin-protein ligase RNF103 (Rnf103).